A 476-amino-acid chain; its full sequence is Cytosolic iron-sulfur assembly component 3 (476 aa).

At Ala2 the chain carries N-acetylalanine. Cys24, Cys71, Cys74, Cys77, Cys190, Cys246, Cys395, and Cys399 together coordinate [4Fe-4S] cluster.

The protein belongs to the NARF family. In terms of assembly, external component of the CIA complex. In the CIA complex, interacts directly with CIAO1 and MMS19.

In terms of biological role, component of the cytosolic iron-sulfur protein assembly (CIA) complex, a multiprotein complex that mediates the incorporation of iron-sulfur cluster into extramitochondrial Fe/S proteins. Seems to negatively regulate the level of HIF1A expression, although this effect could be indirect. This Bos taurus (Bovine) protein is Cytosolic iron-sulfur assembly component 3.